A 219-amino-acid chain; its full sequence is Large ribosomal subunit protein uL1 (219 aa).

It belongs to the universal ribosomal protein uL1 family. As to quaternary structure, component of the large ribosomal subunit.

The protein resides in the cytoplasm. This is Large ribosomal subunit protein uL1 (RPL1) from Encephalitozoon cuniculi (strain GB-M1) (Microsporidian parasite).